A 272-amino-acid chain; its full sequence is ATP synthase subunit a (272 aa).

Helical transmembrane passes span 41 to 61, 101 to 121, 143 to 165, 221 to 241, and 243 to 263; these read VLNI…LLIF, LIAP…LMDL, VPSA…ILYY, LIFI…LNVP, and AIFH…LTIV.

This sequence belongs to the ATPase A chain family. In terms of assembly, F-type ATPases have 2 components, CF(1) - the catalytic core - and CF(0) - the membrane proton channel. CF(1) has five subunits: alpha(3), beta(3), gamma(1), delta(1), epsilon(1). CF(0) has three main subunits: a(1), b(2) and c(9-12). The alpha and beta chains form an alternating ring which encloses part of the gamma chain. CF(1) is attached to CF(0) by a central stalk formed by the gamma and epsilon chains, while a peripheral stalk is formed by the delta and b chains.

The protein resides in the cell inner membrane. Functionally, key component of the proton channel; it plays a direct role in the translocation of protons across the membrane. The polypeptide is ATP synthase subunit a (Sodalis glossinidius (strain morsitans)).